The following is a 449-amino-acid chain: Bifunctional protein GlmU (449 aa).

The tract at residues 1 to 225 is pyrophosphorylase; the sequence is MLSVAILAAG…NGELQGINNR (225 aa). Residues 7 to 10, lysine 21, glutamine 73, and 78 to 79 contribute to the UDP-N-acetyl-alpha-D-glucosamine site; these read LAAG and GT. Residue aspartate 103 participates in Mg(2+) binding. UDP-N-acetyl-alpha-D-glucosamine contacts are provided by glycine 140, glutamate 154, asparagine 169, and asparagine 223. Asparagine 223 is a binding site for Mg(2+). Positions 226–246 are linker; it reads IQLSKCEEIIQNSIKEKHMLN. The interval 247 to 449 is N-acetyltransferase; it reads GVTFINQASC…NIDNWERKKP (203 aa). UDP-N-acetyl-alpha-D-glucosamine-binding residues include arginine 328 and lysine 346. Residue histidine 358 is the Proton acceptor of the active site. UDP-N-acetyl-alpha-D-glucosamine is bound by residues tyrosine 361 and asparagine 372. Residues alanine 375, alanine 418, and arginine 435 each coordinate acetyl-CoA.

This sequence in the N-terminal section; belongs to the N-acetylglucosamine-1-phosphate uridyltransferase family. The protein in the C-terminal section; belongs to the transferase hexapeptide repeat family. As to quaternary structure, homotrimer. It depends on Mg(2+) as a cofactor.

The protein localises to the cytoplasm. The catalysed reaction is alpha-D-glucosamine 1-phosphate + acetyl-CoA = N-acetyl-alpha-D-glucosamine 1-phosphate + CoA + H(+). It carries out the reaction N-acetyl-alpha-D-glucosamine 1-phosphate + UTP + H(+) = UDP-N-acetyl-alpha-D-glucosamine + diphosphate. It functions in the pathway nucleotide-sugar biosynthesis; UDP-N-acetyl-alpha-D-glucosamine biosynthesis; N-acetyl-alpha-D-glucosamine 1-phosphate from alpha-D-glucosamine 6-phosphate (route II): step 2/2. The protein operates within nucleotide-sugar biosynthesis; UDP-N-acetyl-alpha-D-glucosamine biosynthesis; UDP-N-acetyl-alpha-D-glucosamine from N-acetyl-alpha-D-glucosamine 1-phosphate: step 1/1. It participates in bacterial outer membrane biogenesis; LPS lipid A biosynthesis. In terms of biological role, catalyzes the last two sequential reactions in the de novo biosynthetic pathway for UDP-N-acetylglucosamine (UDP-GlcNAc). The C-terminal domain catalyzes the transfer of acetyl group from acetyl coenzyme A to glucosamine-1-phosphate (GlcN-1-P) to produce N-acetylglucosamine-1-phosphate (GlcNAc-1-P), which is converted into UDP-GlcNAc by the transfer of uridine 5-monophosphate (from uridine 5-triphosphate), a reaction catalyzed by the N-terminal domain. The sequence is that of Bifunctional protein GlmU from Prochlorococcus marinus (strain MIT 9312).